A 102-amino-acid chain; its full sequence is Small ribosomal subunit protein uS10 (102 aa).

This sequence belongs to the universal ribosomal protein uS10 family. Part of the 30S ribosomal subunit.

Functionally, involved in the binding of tRNA to the ribosomes. The polypeptide is Small ribosomal subunit protein uS10 (Pseudothermotoga lettingae (strain ATCC BAA-301 / DSM 14385 / NBRC 107922 / TMO) (Thermotoga lettingae)).